A 471-amino-acid chain; its full sequence is Sulfate adenylyltransferase subunit 1 (471 aa).

In terms of domain architecture, tr-type G spans 22–237 (KELLRFLTCG…LESVQITGAK (216 aa)). Residues 31–38 (GSVDDGKS) are G1. Residue 31–38 (GSVDDGKS) coordinates GTP. Residues 89–93 (GITID) are G2. The G3 stretch occupies residues 110–113 (DTPG). GTP-binding positions include 110 to 114 (DTPGH) and 165 to 168 (NKMD). Residues 165–168 (NKMD) are G4. A G5 region spans residues 202-204 (SAL).

It belongs to the TRAFAC class translation factor GTPase superfamily. Classic translation factor GTPase family. CysN/NodQ subfamily. Heterodimer composed of CysD, the smaller subunit, and CysN.

It catalyses the reaction sulfate + ATP + H(+) = adenosine 5'-phosphosulfate + diphosphate. It participates in sulfur metabolism; hydrogen sulfide biosynthesis; sulfite from sulfate: step 1/3. Its function is as follows. With CysD forms the ATP sulfurylase (ATPS) that catalyzes the adenylation of sulfate producing adenosine 5'-phosphosulfate (APS) and diphosphate, the first enzymatic step in sulfur assimilation pathway. APS synthesis involves the formation of a high-energy phosphoric-sulfuric acid anhydride bond driven by GTP hydrolysis by CysN coupled to ATP hydrolysis by CysD. This Saccharophagus degradans (strain 2-40 / ATCC 43961 / DSM 17024) protein is Sulfate adenylyltransferase subunit 1.